Consider the following 186-residue polypeptide: Translation initiation factor IF-3 (186 aa).

The protein belongs to the IF-3 family. In terms of assembly, monomer.

It is found in the cytoplasm. In terms of biological role, IF-3 binds to the 30S ribosomal subunit and shifts the equilibrium between 70S ribosomes and their 50S and 30S subunits in favor of the free subunits, thus enhancing the availability of 30S subunits on which protein synthesis initiation begins. In Borrelia garinii subsp. bavariensis (strain ATCC BAA-2496 / DSM 23469 / PBi) (Borreliella bavariensis), this protein is Translation initiation factor IF-3.